Here is a 570-residue protein sequence, read N- to C-terminus: Chaperonin GroEL 1 (570 aa).

ATP is bound by residues 42–45 (TLGP), Lys-63, 99–103 (DGTTT), Gly-427, and Asp-507. The segment at 537 to 570 (EDEDDDDGGGGGGGGMPAGGAGGMGGMGGMGGMM) is disordered. Residues 545–570 (GGGGGGGMPAGGAGGMGGMGGMGGMM) show a composition bias toward gly residues.

It belongs to the chaperonin (HSP60) family. In terms of assembly, forms a cylinder of 14 subunits composed of two heptameric rings stacked back-to-back. Interacts with the co-chaperonin GroES.

Its subcellular location is the cytoplasm. It catalyses the reaction ATP + H2O + a folded polypeptide = ADP + phosphate + an unfolded polypeptide.. In terms of biological role, together with its co-chaperonin GroES, plays an essential role in assisting protein folding. The GroEL-GroES system forms a nano-cage that allows encapsulation of the non-native substrate proteins and provides a physical environment optimized to promote and accelerate protein folding. The protein is Chaperonin GroEL 1 of Salinibacter ruber (strain DSM 13855 / M31).